A 308-amino-acid polypeptide reads, in one-letter code: N-acetylgalactosamine kinase AgaK (308 aa).

ATP contacts are provided by residues 4–11 (GLDIGGTK) and 132–139 (GTGGGLCI). Residues H156, C174, C176, and C181 each contribute to the Zn(2+) site.

It belongs to the ROK (NagC/XylR) family.

It localises to the cytoplasm. It catalyses the reaction N-acetyl-D-galactosamine + ATP = N-acetyl-D-galactosamine 6-phosphate + ADP + H(+). It carries out the reaction N-acetyl-D-glucosamine + ATP = N-acetyl-D-glucosamine 6-phosphate + ADP + H(+). Involved in the pathway of N-acetyl-D-galactosamine degradation. Catalyzes the phosphorylation of N-acetyl-D-galactosamine (GalNAc) to yield D-galactosamine 6-phosphate (GalN-6-P). It can also phosphorylate N-acetylglucosamine (GlcNAc). This chain is N-acetylgalactosamine kinase AgaK, found in Shewanella sp. (strain ANA-3).